The following is a 686-amino-acid chain: MKFLLPTFIIFIYTLLVSALPTKEGSDPKAAKKYLVSDLPGLHDNITPDDSIPLMFAGQLEIYPESNTHYFFWKFSDSNQETITNRTIFWLNGGPGCSSMDGALLETGPFRINSQQQVISNNGSWHKSGDIIYVDQPAGTGFSYSDTYITDLDQVANYFLKFMEAYYELFPQEINNEIYFAGESYAGQYIPYIANAILQRNKKLHEGEQKYDLRGVLIGNGWVSPNEQSLSYLPFFKDHGLIDIHHPKWATLLAKHEQCQKIVNKIDSTFDDGTVHYYEVSSSTCEAILTDLLEYTQDTANDKNQQCINMYDYTLRDSYPSCGMNWPNELVNVGPFLRQEKVMHQLNLINLKKWNECNGKVGRTFQARHSIPSVHLLPELAKEIPVMLFNGANDIICNSQGVLSYLQKLQWNGETGFINKDNQISWVYDNKEVGYMLWERNISFINIYNSSHMVPYDLPDVSRALIDLITGEYDEKDVDGKKSFVTYPLGSRKENDESKNPVESPSQTIDPIISSSSSSVESSLSSSSASATDSDSTSSKFTRLIQLAVILVIFWGVYVLYASYKSRPSSIIKKPTNNTSNITRSSTGKKKNVQWADQLNQFEDDERNQESNQGIIAKAIGKITGSKDTRGRYAPVHRENDNEYIDDIELGEGISDPNVDEFIIGSDDDDEEEQPRSDPATHKSVS.

A signal peptide spans 1 to 19 (MKFLLPTFIIFIYTLLVSA). Residues 20-543 (LPTKEGSDPK…SDSTSSKFTR (524 aa)) are Lumenal-facing. N-linked (GlcNAc...) asparagine glycosylation is found at Asn85 and Asn122. Active-site residues include Ser184 and Asp394. N-linked (GlcNAc...) asparagine glycans are attached at residues Asn441 and Asn449. His452 is an active-site residue. Residues 489-519 (LGSRKENDESKNPVESPSQTIDPIISSSSSS) form a disordered region. Basic and acidic residues predominate over residues 491-500 (SRKENDESKN). Low complexity predominate over residues 504-519 (SPSQTIDPIISSSSSS). The helical transmembrane segment at 544 to 564 (LIQLAVILVIFWGVYVLYASY) threads the bilayer. The Cytoplasmic segment spans residues 565 to 686 (KSRPSSIIKK…SDPATHKSVS (122 aa)). 2 disordered regions span residues 570-590 (SIIK…TGKK) and 627-686 (KDTR…KSVS). The span at 576–586 (TNNTSNITRSS) shows a compositional bias: low complexity. 2 stretches are compositionally biased toward basic and acidic residues: residues 627 to 641 (KDTR…REND) and 674 to 686 (QPRS…KSVS).

The protein belongs to the peptidase S10 family.

It is found in the golgi apparatus. The protein resides in the trans-Golgi network membrane. The catalysed reaction is Preferential release of a C-terminal arginine or lysine residue.. Functionally, protease with a carboxypeptidase B-like function involved in the C-terminal processing of the lysine and arginine residues from protein precursors. Promotes cell fusion and is involved in the programmed cell death. In Candida dubliniensis (strain CD36 / ATCC MYA-646 / CBS 7987 / NCPF 3949 / NRRL Y-17841) (Yeast), this protein is Pheromone-processing carboxypeptidase KEX1 (KEX1).